We begin with the raw amino-acid sequence, 316 residues long: Methionyl-tRNA formyltransferase (316 aa).

Residue 109–112 (SALP) participates in (6S)-5,6,7,8-tetrahydrofolate binding.

Belongs to the Fmt family.

The enzyme catalyses L-methionyl-tRNA(fMet) + (6R)-10-formyltetrahydrofolate = N-formyl-L-methionyl-tRNA(fMet) + (6S)-5,6,7,8-tetrahydrofolate + H(+). In terms of biological role, attaches a formyl group to the free amino group of methionyl-tRNA(fMet). The formyl group appears to play a dual role in the initiator identity of N-formylmethionyl-tRNA by promoting its recognition by IF2 and preventing the misappropriation of this tRNA by the elongation apparatus. The polypeptide is Methionyl-tRNA formyltransferase (Nocardioides sp. (strain ATCC BAA-499 / JS614)).